Reading from the N-terminus, the 187-residue chain is MFKVKILLIGPSECGKTALANFLSDTTESIGADYSPTQGVRILEFESHNLHNGNKSSSCDVELWDCAGDFKFESCWPALMKDSNGVAVVFNPDVPSHLKEIETWYSAFISSQGLLEGQCLLIAHHKPGSGADTNRPSLAPQLNKLPLIHSNLEEEPEEVRQEFNKYLGKVMRMLSESQEREEMSIIT.

GTP-binding positions include 10-17 (GPSECGKT), 65-69 (DCAGD), and 125-128 (HKPG).

Belongs to the small GTPase superfamily. Rab family.

In Danio rerio (Zebrafish), this protein is Intraflagellar transport protein 22 homolog (ift22).